A 647-amino-acid chain; its full sequence is RalA-binding protein 1 (647 aa).

2 disordered regions span residues 1–151 (MTEC…EKKC) and 163–186 (WKEK…APSL). Residue T2 is modified to N-acetylthreonine. The span at 24–33 (LTRTPSSEEI) shows a compositional bias: polar residues. Residues S29, S30, and S34 each carry the phosphoserine modification. T44 is subject to Phosphothreonine. S48 and S62 each carry phosphoserine. A compositionally biased stretch (basic and acidic residues) spans 52-68 (DILHEPPDIVSDDEKDH). ATP is bound at residue 69–74 (GKKKGK). Basic residues predominate over residues 69 to 79 (GKKKGKFKKKE). Phosphoserine occurs at positions 92 and 93. The span at 102–118 (KMKRSKGIHVFKKPSFS) shows a compositional bias: basic residues. Residues 102–119 (KMKRSKGIHVFKKPSFSK) are nuclear localization signal. Residues 119 to 151 (KKKEKDFKIKEKPKEEKHKEEKHKEEKHKEKKC) show a composition bias toward basic and acidic residues. The mediates association with membranes and could form transmembrane domains stretch occupies residues 154-219 (FTAADVVKQW…PAVFRECVDY (66 aa)). A Rho-GAP domain is found at 192–380 (APFADAVERT…VLLKQVTRPL (189 aa)). Positions 403-499 (RRQEFLLNCL…LTEQEELLAM (97 aa)) are mediates interaction with RALA and RALB. Residue 418–425 (GGIKDFSK) coordinates ATP. A phosphoserine mark is found at S461 and S463. The segment at 500–647 (EQFLRRQIAS…PSKDRKETPI (148 aa)) is mediates interaction with REPS1 and REPS2. Disordered regions lie at residues 525 to 550 (QSRQ…DEEE) and 601 to 647 (EQQL…ETPI). Residues 535–550 (EEYSSDSESESEDEEE) are compositionally biased toward acidic residues. Positions 628–647 (RAAKEQAKPSPSKDRKETPI) are enriched in basic and acidic residues. The residue at position 637 (S637) is a Phosphoserine.

In terms of assembly, interacts with the GTP-bound form of RALA (via effector domain); during mitosis, recruits RALBP1 to the mitochondrion where it promotes DNM1L phosphorylation and mitochondrial fission. Interacts with DNM1L; mediates its mitotic kinase cyclin B-CDK1-mediated phosphorylation during mitosis to promote mitochondrial fission. Interacts with the mitotic kinase cyclin B-CDK1 during mitosis. Interacts with the GTP-bound form of RALB (via effector domain). Interacts with REPS1; the interaction is direct and does not affect RALA-binding nor GTPase activator activity of RALBP1. Interacts with REPS2; the interaction is direct and does not affect RALA-binding nor GTPase activator activity of RALBP1. Interacts with EPN1, NUMB and TFAP2A during interphase and mitosis. Interacts with AP2M1; as part of the AP2 complex. Interacts with CDC42. Interacts with RAC1. Post-translationally, tyrosine-phosphorylated upon stimulation of cells with EGF. May undergo proteolytic cleavage to give peptides which reassemble to form a transporter complex. As to expression, ubiquitously expressed.

The protein localises to the cell membrane. The protein resides in the cytoplasm. Its subcellular location is the cytosol. It localises to the cytoskeleton. It is found in the spindle pole. The protein localises to the nucleus. The protein resides in the mitochondrion. It carries out the reaction an S-substituted glutathione(in) + ATP + H2O = an S-substituted glutathione(out) + ADP + phosphate + H(+). It catalyses the reaction ATP + H2O + xenobioticSide 1 = ADP + phosphate + xenobioticSide 2.. The enzyme catalyses leukotriene C4(in) + ATP + H2O = leukotriene C4(out) + ADP + phosphate + H(+). Functionally, multifunctional protein that functions as a downstream effector of RALA and RALB. As a GTPase-activating protein/GAP can inactivate CDC42 and RAC1 by stimulating their GTPase activity. As part of the Ral signaling pathway, may also regulate ligand-dependent EGF and insulin receptors-mediated endocytosis. During mitosis, may act as a scaffold protein in the phosphorylation of EPSIN/EPN1 by the mitotic kinase cyclin B-CDK1, preventing endocytosis during that phase of the cell cycle. During mitosis, also controls mitochondrial fission as an effector of RALA. Recruited to mitochondrion by RALA, acts as a scaffold to foster the mitotic kinase cyclin B-CDK1-mediated phosphorylation and activation of DNM1L. Its function is as follows. Could also function as a primary ATP-dependent active transporter for glutathione conjugates of electrophiles. May also actively catalyze the efflux of a wide range of substrates including xenobiotics like doxorubicin (DOX) contributing to cell multidrug resistance. The sequence is that of RalA-binding protein 1 from Rattus norvegicus (Rat).